The following is a 294-amino-acid chain: ATP synthase gamma chain (294 aa).

This sequence belongs to the ATPase gamma chain family. In terms of assembly, F-type ATPases have 2 components, CF(1) - the catalytic core - and CF(0) - the membrane proton channel. CF(1) has five subunits: alpha(3), beta(3), gamma(1), delta(1), epsilon(1). CF(0) has three main subunits: a, b and c.

The protein localises to the cell inner membrane. Produces ATP from ADP in the presence of a proton gradient across the membrane. The gamma chain is believed to be important in regulating ATPase activity and the flow of protons through the CF(0) complex. This Campylobacter jejuni subsp. jejuni serotype O:23/36 (strain 81-176) protein is ATP synthase gamma chain.